A 257-amino-acid polypeptide reads, in one-letter code: Pyridoxine 5'-phosphate synthase (257 aa).

Residue N6 participates in 3-amino-2-oxopropyl phosphate binding. Position 8–9 (8–9 (DH)) interacts with 1-deoxy-D-xylulose 5-phosphate. R17 is a binding site for 3-amino-2-oxopropyl phosphate. H42 serves as the catalytic Proton acceptor. Positions 44 and 49 each coordinate 1-deoxy-D-xylulose 5-phosphate. Catalysis depends on E69, which acts as the Proton acceptor. T99 contacts 1-deoxy-D-xylulose 5-phosphate. H211 acts as the Proton donor in catalysis. 3-amino-2-oxopropyl phosphate-binding positions include G212 and 233–234 (GQ).

Belongs to the PNP synthase family. In terms of assembly, homooctamer; tetramer of dimers.

The protein localises to the cytoplasm. It catalyses the reaction 3-amino-2-oxopropyl phosphate + 1-deoxy-D-xylulose 5-phosphate = pyridoxine 5'-phosphate + phosphate + 2 H2O + H(+). Its pathway is cofactor biosynthesis; pyridoxine 5'-phosphate biosynthesis; pyridoxine 5'-phosphate from D-erythrose 4-phosphate: step 5/5. Its function is as follows. Catalyzes the complicated ring closure reaction between the two acyclic compounds 1-deoxy-D-xylulose-5-phosphate (DXP) and 3-amino-2-oxopropyl phosphate (1-amino-acetone-3-phosphate or AAP) to form pyridoxine 5'-phosphate (PNP) and inorganic phosphate. The chain is Pyridoxine 5'-phosphate synthase from Campylobacter fetus subsp. fetus (strain 82-40).